The chain runs to 783 residues: Probable phosphoketolase (783 aa).

It belongs to the XFP family. The cofactor is thiamine diphosphate.

The protein is Probable phosphoketolase of Rhodopseudomonas palustris (strain ATCC BAA-98 / CGA009).